The sequence spans 542 residues: Chaperonin GroEL (542 aa).

ATP contacts are provided by residues 29-32, 86-90, Gly-413, and Asp-493; these read TLGP and DGTTT.

This sequence belongs to the chaperonin (HSP60) family. As to quaternary structure, forms a cylinder of 14 subunits composed of two heptameric rings stacked back-to-back. Interacts with the co-chaperonin GroES.

The protein localises to the cytoplasm. The catalysed reaction is ATP + H2O + a folded polypeptide = ADP + phosphate + an unfolded polypeptide.. Its function is as follows. Together with its co-chaperonin GroES, plays an essential role in assisting protein folding. The GroEL-GroES system forms a nano-cage that allows encapsulation of the non-native substrate proteins and provides a physical environment optimized to promote and accelerate protein folding. The chain is Chaperonin GroEL from Elusimicrobium minutum (strain Pei191).